The following is a 255-amino-acid chain: ParA family protein CPn_0805/CP_1066/CPj0805/CpB0834 (255 aa).

The protein belongs to the ParA family.

The polypeptide is ParA family protein CPn_0805/CP_1066/CPj0805/CpB0834 (Chlamydia pneumoniae (Chlamydophila pneumoniae)).